We begin with the raw amino-acid sequence, 78 residues long: Delta-conotoxin-like CVIE (78 aa).

Positions methionine 1–alanine 22 are cleaved as a signal peptide. Residues aspartate 23–asparagine 49 constitute a propeptide that is removed on maturation. 3 cysteine pairs are disulfide-bonded: cysteine 54-cysteine 69, cysteine 61-cysteine 73, and cysteine 68-cysteine 77. Proline 65 carries the 4-hydroxyproline modification.

Belongs to the conotoxin O1 superfamily. In terms of tissue distribution, expressed by the venom duct.

The protein resides in the secreted. Functionally, delta-conotoxins bind to site 6 of voltage-gated sodium channels (Nav) and inhibit the inactivation process. This chain is Delta-conotoxin-like CVIE, found in Conus catus (Cat cone).